The following is a 494-amino-acid chain: tRNA-2-methylthio-N(6)-dimethylallyladenosine synthase (494 aa).

Residues R4–H120 form the MTTase N-terminal domain. 6 residues coordinate [4Fe-4S] cluster: C13, C49, C83, C157, C161, and C164. The region spanning R143 to E374 is the Radical SAM core domain. A TRAM domain is found at R376–L449. A disordered region spans residues R465–R494.

Belongs to the methylthiotransferase family. MiaB subfamily. In terms of assembly, monomer. [4Fe-4S] cluster serves as cofactor.

The protein resides in the cytoplasm. It catalyses the reaction N(6)-dimethylallyladenosine(37) in tRNA + (sulfur carrier)-SH + AH2 + 2 S-adenosyl-L-methionine = 2-methylsulfanyl-N(6)-dimethylallyladenosine(37) in tRNA + (sulfur carrier)-H + 5'-deoxyadenosine + L-methionine + A + S-adenosyl-L-homocysteine + 2 H(+). Functionally, catalyzes the methylthiolation of N6-(dimethylallyl)adenosine (i(6)A), leading to the formation of 2-methylthio-N6-(dimethylallyl)adenosine (ms(2)i(6)A) at position 37 in tRNAs that read codons beginning with uridine. The protein is tRNA-2-methylthio-N(6)-dimethylallyladenosine synthase of Parafrankia sp. (strain EAN1pec).